The following is a 1152-amino-acid chain: Syntaxin-binding protein 5 (1152 aa).

The tract at residues 14–35 is disordered; the sequence is TAGSSSASQQQQQQQHPPGNRE. Over residues 17-28 the composition is skewed to low complexity; that stretch reads SSSASQQQQQQQ. WD repeat units follow at residues 62–95, 102–141, 146–182, 201–235, 241–273, 295–337, 345–379, 401–478, 506–620, and 634–696; these read SALAFDPVQKILAVGTQTGALRLFGRPGVECYCQ, VIQLQFLINEGALVSALADDTLHLWNLRQKRPAVLHSLKF, VTFCHLPFQSKWLYVGTERGNIHIVNVESFTLSGYVI, HISDNPMDEGKLLIGFESGTVVLWDLKSKKADYRY, IHSVAWHHEGKQFICSHSDGTLTIWNVRSPTKP, PILK…KSTA, IVDFLTLCETPYPNDFQEPYAVVVLLEKDLVLIDL, TCCE…YKLK, QIIS…ELVI, and TSLA…SGAG. Disordered regions lie at residues 557-596 and 675-731; these read TPEGEQPPPLSTPVGSSTSQPIPPQSHPSTSSSSSDGLRD and SNDP…QKVN. Ser693 is subject to Phosphoserine. Residues 713-722 are compositionally biased toward low complexity; it reads SPTSGSSSPH. Residue Ser724 is modified to Phosphoserine; by PKA. Ser760 carries the phosphoserine modification. Position 763 is a phosphothreonine (Thr763). Ser783 is subject to Phosphoserine. Position 785 is a phosphothreonine (Thr785). At Ser786 the chain carries Phosphoserine. WD repeat units follow at residues 795-852, 861-935, 940-984, and 998-1021; these read ISAL…SGTI, RMAF…QNCA, ITET…LDVY, and CFANSGQALYLVSPTEIQRLTYSQ. The segment covering 879 to 893 has biased composition (basic and acidic residues); that stretch reads WTEHNVPEEKDEKEK. The disordered stretch occupies residues 879–907; that stretch reads WTEHNVPEEKDEKEKLKKRRPVSVSPSSS. Phosphoserine occurs at positions 901 and 903. Thr1040 carries the post-translational modification Phosphothreonine. Ser1059 and Ser1132 each carry phosphoserine. The 61-residue stretch at 1087–1147 folds into the v-SNARE coiled-coil homology domain; it reads GIEGVKGAAS…HEMMLKYKDK (61 aa).

The protein belongs to the WD repeat L(2)GL family. As to quaternary structure, part of a complex that contains STXBP5, STX4A and SNAP23. Interacts with STX1A and STX4A via its v-SNARE homology domain. Part of a complex that contains STX1, STXBP5, SNAP25 and SYT1. Post-translationally, phosphorylation by PKA reduces interaction with STX1A and enhances synaptic neurotransmitter release. In terms of tissue distribution, isoform 1 is detected in heart, brain, lung, liver, skeletal muscle, kidney and testis. Isoform 2 is detected in brain and in testis. Isoform 3 is detected in testis.

The protein resides in the cytoplasm. It is found in the cell membrane. It localises to the cytoplasmic vesicle membrane. Its subcellular location is the synapse. The protein localises to the cytoplasmic vesicle. The protein resides in the secretory vesicle. It is found in the synaptic vesicle. In terms of biological role, inhibits translocation of GLUT4 from intracellular vesicles to the plasma membrane. Plays a regulatory role in calcium-dependent exocytosis and neurotransmitter release. Inhibits membrane fusion between transport vesicles and the plasma membrane. May modulate the assembly of trans-SNARE complexes between transport vesicles and the plasma membrane. Competes with STXBP1 for STX1 binding. In Rattus norvegicus (Rat), this protein is Syntaxin-binding protein 5 (Stxbp5).